We begin with the raw amino-acid sequence, 148 residues long: D-aminoacyl-tRNA deacylase (148 aa).

Residues 137 to 138 (GP) carry the Gly-cisPro motif, important for rejection of L-amino acids motif.

The protein belongs to the DTD family. In terms of assembly, homodimer.

It is found in the cytoplasm. It carries out the reaction glycyl-tRNA(Ala) + H2O = tRNA(Ala) + glycine + H(+). The catalysed reaction is a D-aminoacyl-tRNA + H2O = a tRNA + a D-alpha-amino acid + H(+). Its function is as follows. An aminoacyl-tRNA editing enzyme that deacylates mischarged D-aminoacyl-tRNAs. Also deacylates mischarged glycyl-tRNA(Ala), protecting cells against glycine mischarging by AlaRS. Acts via tRNA-based rather than protein-based catalysis; rejects L-amino acids rather than detecting D-amino acids in the active site. By recycling D-aminoacyl-tRNA to D-amino acids and free tRNA molecules, this enzyme counteracts the toxicity associated with the formation of D-aminoacyl-tRNA entities in vivo and helps enforce protein L-homochirality. This chain is D-aminoacyl-tRNA deacylase, found in Deinococcus geothermalis (strain DSM 11300 / CIP 105573 / AG-3a).